Reading from the N-terminus, the 338-residue chain is Ketol-acid reductoisomerase (NADP(+)) (338 aa).

One can recognise a KARI N-terminal Rossmann domain in the interval 1–181 (MQVYYDKDAD…GGGRAGVIET (181 aa)). Residues 24 to 27 (YGSQ), Arg47, Ser50, Ser52, and 82 to 85 (DEHQ) each bind NADP(+). His107 is an active-site residue. Gly133 is a binding site for NADP(+). Positions 182 to 327 (SFREETETDL…ERLRGMMPWI (146 aa)) constitute a KARI C-terminal knotted domain. Positions 190, 194, 226, and 230 each coordinate Mg(2+). Ser251 is a binding site for substrate.

This sequence belongs to the ketol-acid reductoisomerase family. Requires Mg(2+) as cofactor.

It carries out the reaction (2R)-2,3-dihydroxy-3-methylbutanoate + NADP(+) = (2S)-2-acetolactate + NADPH + H(+). The catalysed reaction is (2R,3R)-2,3-dihydroxy-3-methylpentanoate + NADP(+) = (S)-2-ethyl-2-hydroxy-3-oxobutanoate + NADPH + H(+). It functions in the pathway amino-acid biosynthesis; L-isoleucine biosynthesis; L-isoleucine from 2-oxobutanoate: step 2/4. It participates in amino-acid biosynthesis; L-valine biosynthesis; L-valine from pyruvate: step 2/4. Involved in the biosynthesis of branched-chain amino acids (BCAA). Catalyzes an alkyl-migration followed by a ketol-acid reduction of (S)-2-acetolactate (S2AL) to yield (R)-2,3-dihydroxy-isovalerate. In the isomerase reaction, S2AL is rearranged via a Mg-dependent methyl migration to produce 3-hydroxy-3-methyl-2-ketobutyrate (HMKB). In the reductase reaction, this 2-ketoacid undergoes a metal-dependent reduction by NADPH to yield (R)-2,3-dihydroxy-isovalerate. This is Ketol-acid reductoisomerase (NADP(+)) from Alkalilimnicola ehrlichii (strain ATCC BAA-1101 / DSM 17681 / MLHE-1).